The sequence spans 241 residues: Orotidine 5'-phosphate decarboxylase (241 aa).

Residues D16, K37, 64–73 (DLKFHDIPTT), T128, R190, Q199, G219, and R220 each bind substrate. K66 functions as the Proton donor in the catalytic mechanism.

The protein belongs to the OMP decarboxylase family. Type 1 subfamily. In terms of assembly, homodimer.

It carries out the reaction orotidine 5'-phosphate + H(+) = UMP + CO2. It functions in the pathway pyrimidine metabolism; UMP biosynthesis via de novo pathway; UMP from orotate: step 2/2. In terms of biological role, catalyzes the decarboxylation of orotidine 5'-monophosphate (OMP) to uridine 5'-monophosphate (UMP). This is Orotidine 5'-phosphate decarboxylase from Prochlorococcus marinus (strain NATL1A).